The following is a 320-amino-acid chain: MQRTVLEGVGSYLPERIVTNHELATRIDTSDAWIRERTGIGQRHIAAAHETATFMGAEAARRALAAAGASADSVDAVIVATSTPDQGFPATAVSIQAAIGMTRGFAFDLSAACSGFVYGVSVADAMIRAGQCRSALVIGTEVYSRILNWEDRGTCVLFGDGAGAVLLRAGTGEDDRGVISTHIHSDGRYGDILFIDGATGQDDRPQHLVMNGREVFRHAVSKLAGAVDEALAANDLTQADIDWLVPHQANRRIIDAMGKRLGLAPEQVVVTVDRHANTSAASIPLALDEAVRDGRIRRGHLVLIEALGGGLTWGSALIRF.

Catalysis depends on residues Cys113 and His247. The ACP-binding stretch occupies residues 248–252; sequence QANRR. The active site involves Asn277.

Belongs to the thiolase-like superfamily. FabH family. As to quaternary structure, homodimer.

The protein resides in the cytoplasm. It catalyses the reaction malonyl-[ACP] + acetyl-CoA + H(+) = 3-oxobutanoyl-[ACP] + CO2 + CoA. The protein operates within lipid metabolism; fatty acid biosynthesis. Catalyzes the condensation reaction of fatty acid synthesis by the addition to an acyl acceptor of two carbons from malonyl-ACP. Catalyzes the first condensation reaction which initiates fatty acid synthesis and may therefore play a role in governing the total rate of fatty acid production. Possesses both acetoacetyl-ACP synthase and acetyl transacylase activities. Its substrate specificity determines the biosynthesis of branched-chain and/or straight-chain of fatty acids. The chain is Beta-ketoacyl-[acyl-carrier-protein] synthase III from Acidiphilium cryptum (strain JF-5).